We begin with the raw amino-acid sequence, 249 residues long: Selenoprotein BthD (249 aa).

The tract at residues 1–22 (MPPKRNKKAEAPIAERDAGEEL) is disordered. Basic and acidic residues predominate over residues 8 to 19 (KAEAPIAERDAG). The cysteinyl-selenocysteine (Cys-Sec); redox-active cross-link spans 34–37 (CRSU). Selenocysteine 37 is a non-standard amino acid (selenocysteine). The disordered stretch occupies residues 122-249 (QQESKEQTNT…EATAGAKRRR (128 aa)). Serine 147 carries the phosphoserine modification. Positions 175–198 (EQKSEEEPTQVDSKEAKQSKELVK) are enriched in basic and acidic residues. Over residues 199-210 (TKRQPKAQKKQA) the composition is skewed to basic residues.

As to expression, expressed in the developing salivary gland at late stages of embryogenesis. Also expressed in brain, neuroblast and wing disk.

The protein resides in the cytoplasm. The protein localises to the secreted. May be involved in a redox-related process. Required for survival and specifically for salivary gland morphogenesis. The protein is Selenoprotein BthD (BthD) of Drosophila melanogaster (Fruit fly).